We begin with the raw amino-acid sequence, 529 residues long: ATP synthase subunit alpha (529 aa).

Position 173–180 (173–180 (GDRQTGKT)) interacts with ATP.

The protein belongs to the ATPase alpha/beta chains family. F-type ATPases have 2 components, CF(1) - the catalytic core - and CF(0) - the membrane proton channel. CF(1) has five subunits: alpha(3), beta(3), gamma(1), delta(1), epsilon(1). CF(0) has three main subunits: a(1), b(2) and c(9-12). The alpha and beta chains form an alternating ring which encloses part of the gamma chain. CF(1) is attached to CF(0) by a central stalk formed by the gamma and epsilon chains, while a peripheral stalk is formed by the delta and b chains.

It is found in the cell membrane. The catalysed reaction is ATP + H2O + 4 H(+)(in) = ADP + phosphate + 5 H(+)(out). Functionally, produces ATP from ADP in the presence of a proton gradient across the membrane. The alpha chain is a regulatory subunit. The chain is ATP synthase subunit alpha from Streptomyces avermitilis (strain ATCC 31267 / DSM 46492 / JCM 5070 / NBRC 14893 / NCIMB 12804 / NRRL 8165 / MA-4680).